A 404-amino-acid chain; its full sequence is Retrotransposable element SLACS 45 kDa protein (404 aa).

2 stretches are compositionally biased toward polar residues: residues 1-11 (MVRNLRSSEPQ) and 29-41 (PALNLQWPGQKQV). 5 disordered regions span residues 1–62 (MVRN…NTSI), 86–111 (KKAAHSPLKTKPVNKEGNRKKYGRPP), 134–251 (LGKG…KKGA), 317–341 (CRQQHPGGPPDSLHPDNNRESGAVS), and 369–404 (PKLPVPEQGDYPNARSGIGTGAPHSPHHCDRSAGPP). The span at 98 to 111 (VNKEGNRKKYGRPP) shows a compositional bias: basic and acidic residues. Over residues 141–151 (TAHTKSNQSRV) the composition is skewed to polar residues. The C2H2-type zinc finger occupies 300–321 (CPVCGFAHPEETITVTHCRQQH). Residues 395 to 404 (HHCDRSAGPP) are compositionally biased toward basic and acidic residues.

The sequence is that of Retrotransposable element SLACS 45 kDa protein from Trypanosoma brucei gambiense.